Reading from the N-terminus, the 94-residue chain is Protein RESPONSE TO LOW SULFUR 1 (94 aa).

The stretch at 8 to 35 (VTVAAEEMDELRRRNIELSREVAEMKTE) forms a coiled coil.

The polypeptide is Protein RESPONSE TO LOW SULFUR 1 (Arabidopsis thaliana (Mouse-ear cress)).